The chain runs to 146 residues: Actin-depolymerizing factor 6 (146 aa).

At S13 the chain carries Phosphoserine. Positions 14–146 constitute an ADF-H domain; sequence GMGVADESKT…DLEVLRERAN (133 aa).

The protein belongs to the actin-binding proteins ADF family. Post-translationally, phosphorylated. In terms of tissue distribution, expressed in vascular tissues of all organs.

The protein localises to the cytoplasm. The protein resides in the cytoskeleton. Actin-depolymerizing protein. Severs actin filaments (F-actin) and binds to actin monomers. This is Actin-depolymerizing factor 6 (ADF6) from Arabidopsis thaliana (Mouse-ear cress).